Consider the following 220-residue polypeptide: Protein-L-isoaspartate O-methyltransferase (220 aa).

The active site involves Ser65.

It belongs to the methyltransferase superfamily. L-isoaspartyl/D-aspartyl protein methyltransferase family.

The protein localises to the cytoplasm. It carries out the reaction [protein]-L-isoaspartate + S-adenosyl-L-methionine = [protein]-L-isoaspartate alpha-methyl ester + S-adenosyl-L-homocysteine. Catalyzes the methyl esterification of L-isoaspartyl residues in peptides and proteins that result from spontaneous decomposition of normal L-aspartyl and L-asparaginyl residues. It plays a role in the repair and/or degradation of damaged proteins. This Pelodictyon phaeoclathratiforme (strain DSM 5477 / BU-1) protein is Protein-L-isoaspartate O-methyltransferase.